The chain runs to 139 residues: Acidic phospholipase A2 H1E6 (139 aa).

The signal sequence occupies residues 1-16 (MRTLWILAVLQVGVEG). 7 cysteine pairs are disulfide-bonded: Cys-42/Cys-132, Cys-44/Cys-60, Cys-59/Cys-111, Cys-65/Cys-139, Cys-66/Cys-104, Cys-73/Cys-97, and Cys-91/Cys-102. Residues Tyr-43, Gly-45, and Gly-47 each contribute to the Ca(2+) site. The active site involves His-63. Residue Asp-64 coordinates Ca(2+). The active site involves Asp-105.

In terms of assembly, homodimer. Ca(2+) is required as a cofactor. Expressed by the venom gland.

The protein localises to the secreted. It carries out the reaction a 1,2-diacyl-sn-glycero-3-phosphocholine + H2O = a 1-acyl-sn-glycero-3-phosphocholine + a fatty acid + H(+). Functionally, snake venom phospholipase A2 (PLA2) that inhibits ADP-induced platelet aggregation. PLA2 catalyzes the calcium-dependent hydrolysis of the 2-acyl groups in 3-sn-phosphoglycerides. The sequence is that of Acidic phospholipase A2 H1E6 from Calloselasma rhodostoma (Malayan pit viper).